Consider the following 1373-residue polypeptide: DNA-directed RNA polymerase subunit beta'' (1373 aa).

The Zn(2+) site is built by Cys-224, Cys-296, Cys-303, and Cys-306.

The protein belongs to the RNA polymerase beta' chain family. RpoC2 subfamily. As to quaternary structure, in plastids the minimal PEP RNA polymerase catalytic core is composed of four subunits: alpha, beta, beta', and beta''. When a (nuclear-encoded) sigma factor is associated with the core the holoenzyme is formed, which can initiate transcription. Requires Zn(2+) as cofactor.

It is found in the plastid. It localises to the chloroplast. The catalysed reaction is RNA(n) + a ribonucleoside 5'-triphosphate = RNA(n+1) + diphosphate. DNA-dependent RNA polymerase catalyzes the transcription of DNA into RNA using the four ribonucleoside triphosphates as substrates. The polypeptide is DNA-directed RNA polymerase subunit beta'' (Amborella trichopoda).